A 244-amino-acid chain; its full sequence is Putative lipoprotein LprA (244 aa).

The N-terminal stretch at 1 to 24 (MKHPPCSVVAAATAILAVVLAIGG) is a signal peptide. Residue cysteine 25 is the site of N-palmitoyl cysteine attachment. Cysteine 25 is lipidated: S-diacylglycerol cysteine.

Belongs to the LppX/LprAFG lipoprotein family.

Its subcellular location is the cell membrane. This chain is Putative lipoprotein LprA (lprA), found in Mycobacterium tuberculosis (strain CDC 1551 / Oshkosh).